The following is a 691-amino-acid chain: Guanylate cyclase soluble subunit alpha-1 (691 aa).

The disordered stretch occupies residues P26–T65. The region spanning T482–E609 is the Guanylate cyclase domain.

Belongs to the adenylyl cyclase class-4/guanylyl cyclase family. In terms of assembly, heterodimer of an alpha and a beta chain.

Its subcellular location is the cytoplasm. The enzyme catalyses GTP = 3',5'-cyclic GMP + diphosphate. Activated by nitric oxide in the presence of magnesium or manganese ions. This chain is Guanylate cyclase soluble subunit alpha-1 (GUCY1A1), found in Bos taurus (Bovine).